A 424-amino-acid polypeptide reads, in one-letter code: UPF0597 protein Sbal223_1296 (424 aa).

The protein belongs to the UPF0597 family.

The sequence is that of UPF0597 protein Sbal223_1296 from Shewanella baltica (strain OS223).